Consider the following 172-residue polypeptide: Protein nemuri (172 aa).

Positions 1–25 are cleaved as a signal peptide; sequence MSAKYTLIFALAALCCLVFSTEAAA. Residues 27 to 172 are disordered; sequence RSRVLSSRRG…KRRSGKGNKA (146 aa). 3 stretches are compositionally biased toward basic and acidic residues: residues 35-50, 58-90, and 97-108; these read RGSE…KEDS, DLER…DKET, and TIVKPNKDDARA. Residues 45–74 adopt a coiled-coil conformation; sequence DNKEDSELAAQEQDLERQEQEEQNDRLEGR. The segment covering 109–172 has biased composition (basic residues); sequence RRIVRAGRRR…KRRSGKGNKA (64 aa).

Detected in the brain where it accumulates in the dorsal fan-shaped body following sleep deprivation (at protein level). Expressed in the adult body.

Its subcellular location is the secreted. In terms of biological role, antimicrobial protein which is essential for the homeostatic regulation of sleep. Promotes sleep following sleep deprivation or bacterial infection and increases survival following bacterial infection. Likely to promote survival to bacterial infection in two ways; by contributing to the innate immune response and by promoting sleep during sickness to aid recovery. The chain is Protein nemuri from Drosophila melanogaster (Fruit fly).